Here is a 753-residue protein sequence, read N- to C-terminus: Eukaryotic translation initiation factor 3 subunit B (753 aa).

Positions 42–129 (TMLVVDNIPI…NVLHVNRFGD (88 aa)) constitute an RRM domain. WD repeat units lie at residues 142–185 (DLPS…WWNG), 203–241 (NSKW…GPIG), 321–362 (DTQS…LLDR), 537–580 (LDSK…DERR), and 595–640 (GEHY…LLHE). Positions 723–753 (KSKAKIDVKGQEARVEEWVEELIDETEELSM) form a coiled coil.

Belongs to the eIF-3 subunit B family. Component of the eukaryotic translation initiation factor 3 (eIF-3) complex.

The protein localises to the cytoplasm. Functionally, RNA-binding component of the eukaryotic translation initiation factor 3 (eIF-3) complex, which is involved in protein synthesis of a specialized repertoire of mRNAs and, together with other initiation factors, stimulates binding of mRNA and methionyl-tRNAi to the 40S ribosome. The eIF-3 complex specifically targets and initiates translation of a subset of mRNAs involved in cell proliferation. In Cryptococcus neoformans var. neoformans serotype D (strain B-3501A) (Filobasidiella neoformans), this protein is Eukaryotic translation initiation factor 3 subunit B.